The sequence spans 126 residues: Aspartate 1-decarboxylase (126 aa).

The active-site Schiff-base intermediate with substrate; via pyruvic acid is the Ser25. Position 25 is a pyruvic acid (Ser) (Ser25). Substrate is bound at residue Thr57. Tyr58 serves as the catalytic Proton donor. Residue 73–75 (GAA) participates in substrate binding.

Belongs to the PanD family. In terms of assembly, heterooctamer of four alpha and four beta subunits. Requires pyruvate as cofactor. Post-translationally, is synthesized initially as an inactive proenzyme, which is activated by self-cleavage at a specific serine bond to produce a beta-subunit with a hydroxyl group at its C-terminus and an alpha-subunit with a pyruvoyl group at its N-terminus.

The protein localises to the cytoplasm. The enzyme catalyses L-aspartate + H(+) = beta-alanine + CO2. It functions in the pathway cofactor biosynthesis; (R)-pantothenate biosynthesis; beta-alanine from L-aspartate: step 1/1. In terms of biological role, catalyzes the pyruvoyl-dependent decarboxylation of aspartate to produce beta-alanine. The chain is Aspartate 1-decarboxylase from Escherichia coli O6:H1 (strain CFT073 / ATCC 700928 / UPEC).